We begin with the raw amino-acid sequence, 460 residues long: Dynactin subunit 4 (460 aa).

The residue at position 2 (Ala-2) is an N-acetylalanine. The stretch at 152–172 (QQLAQKEKVERDRKKLARRRN) forms a coiled coil. Ser-196 is modified (phosphoserine). Residue Lys-215 forms a Glycyl lysine isopeptide (Lys-Gly) (interchain with G-Cter in SUMO2) linkage. Thr-407 is subject to Phosphothreonine.

It belongs to the dynactin subunit 4 family. As to quaternary structure, subunit of dynactin, a multiprotein complex part of a tripartite complex with dynein and a adapter, such as BICDL1, BICD2 or HOOK3. The dynactin complex is built around ACTR1A/ACTB filament and consists of an actin-related filament composed of a shoulder domain, a pointed end and a barbed end. Its length is defined by its flexible shoulder domain. The soulder is composed of 2 DCTN1 subunits, 4 DCTN2 and 2 DCTN3. The 4 DCNT2 (via N-terminus) bind the ACTR1A filament and act as molecular rulers to determine the length. The pointed end is important for binding dynein-dynactin cargo adapters. Consists of 4 subunits: ACTR10, DCNT4, DCTN5 and DCTN6. The barbed end is composed of a CAPZA1:CAPZB heterodimers, which binds ACTR1A/ACTB filament and dynactin and stabilizes dynactin. Interacts with ATP7B, but not ATP7A, in a copper-dependent manner. Interacts with ANK2; this interaction is required for localization at costameres. Interacts with N4BP2L1.

The protein localises to the cytoplasm. It is found in the cytoskeleton. It localises to the microtubule organizing center. Its subcellular location is the centrosome. The protein resides in the stress fiber. The protein localises to the cell cortex. It is found in the myofibril. It localises to the sarcomere. Its function is as follows. Part of the dynactin complex that activates the molecular motor dynein for ultra-processive transport along microtubules. This Homo sapiens (Human) protein is Dynactin subunit 4.